Consider the following 80-residue polypeptide: Defensin-like protein 276 (80 aa).

An N-terminal signal peptide occupies residues 1–24 (MSGQKYQLVSLLLIICLLFSQSTA). Cystine bridges form between cysteine 27/cysteine 67, cysteine 33/cysteine 55, cysteine 39/cysteine 65, and cysteine 43/cysteine 66.

The protein belongs to the DEFL family.

The protein resides in the secreted. The chain is Defensin-like protein 276 from Arabidopsis thaliana (Mouse-ear cress).